A 398-amino-acid polypeptide reads, in one-letter code: MLYICNKRRLFMSNYLFTSESVSEGHPDKVADQISDAILDAILEQDPQARVACETLVTTGMALIAGEITTSAWVDMPEVVRNTIKEIGYNSSEMGFDWQSCAVMTTIDKQSPDIAQGVNEGAGIDLDQGAGDQGLMFGYASNETDVLMPMPITLAHRLTRRQAQVRKSSILPWLRPDAKSQVTIEYENKIPKRIDAVVLSTQHDESISYNDLKEAVMEEIIKPTLPADMIDANTKFFINPTGRFVIGGPVGDCGLTGRKIIVDTYGGKALHGGGAFSGKDPSKVDRSSAYYGRYVAKNLVAAGIASELQIQVAYAIGIAQPVSINVNSFGTGRISDAAIKELILGNFDLRPKAIVQQLDLLRPIYRQTAAYGHFGRSDVEFPWERTDKIEELKSAAGL.

H26 contacts ATP. D28 provides a ligand contact to Mg(2+). Position 54 (E54) interacts with K(+). L-methionine is bound by residues E67 and Q110. A flexible loop region spans residues 110–120; that stretch reads QSPDIAQGVNE. Residues 177 to 179, 243 to 244, D252, 258 to 259, A275, and K279 contribute to the ATP site; these read DAK, RF, and RK. Position 252 (D252) interacts with L-methionine. L-methionine is bound at residue K283.

This sequence belongs to the AdoMet synthase family. In terms of assembly, homotetramer; dimer of dimers. It depends on Mg(2+) as a cofactor. K(+) is required as a cofactor.

The protein localises to the cytoplasm. The enzyme catalyses L-methionine + ATP + H2O = S-adenosyl-L-methionine + phosphate + diphosphate. Its pathway is amino-acid biosynthesis; S-adenosyl-L-methionine biosynthesis; S-adenosyl-L-methionine from L-methionine: step 1/1. In terms of biological role, catalyzes the formation of S-adenosylmethionine (AdoMet) from methionine and ATP. The overall synthetic reaction is composed of two sequential steps, AdoMet formation and the subsequent tripolyphosphate hydrolysis which occurs prior to release of AdoMet from the enzyme. This Desulfotalea psychrophila (strain LSv54 / DSM 12343) protein is S-adenosylmethionine synthase.